Here is a 619-residue protein sequence, read N- to C-terminus: Cationic amino acid transporter 3 (619 aa).

Topologically, residues 1–36 (MLWQALRRFGQKLVRRRLLELGMGETRLARCLSTLD) are cytoplasmic. The chain crosses the membrane as a helical span at residues 37–57 (LVALGVGSTLGAGVYVLAGEV). The Extracellular segment spans residues 58-61 (AKEK). The chain crosses the membrane as a helical span at residues 62–82 (AGPSIVICFLVAALSSVLAGL). Topologically, residues 83–107 (CYAEFGARVPGSGSAYLYSYVTVGE) are cytoplasmic. The chain crosses the membrane as a helical span at residues 108 to 128 (LWAFTTGWNLILSYVIGTASV). Topologically, residues 129–162 (ARAWSSAFDNLIGNHISQTLKGTILLNMPHVLAE) are extracellular. Residues 163–183 (YPDFFALALVLLLTGLLVLGA) form a helical membrane-spanning segment. Topologically, residues 184-191 (NESGLVTK) are cytoplasmic. A helical membrane pass occupies residues 192-212 (VFTGMNLLVLGFVIISGFIKG). The Extracellular segment spans residues 213–244 (ELRNWKLTKEDYCLTMSESNGTCSLDSMGSGG). A glycan (N-linked (GlcNAc...) asparagine) is linked at asparagine 232. A helical transmembrane segment spans residues 245–265 (FMPFGLEGILRGAATCFYAFV). Over 266–285 (GFDCIATTGEEAQNPQRSIP) the chain is Cytoplasmic. A helical membrane pass occupies residues 286 to 306 (MGIVISLSICFLAYFGVSSAL). At 307-335 (TLMMPYYKLQPESPLPEAFTYVGWEPARY) the chain is on the extracellular side. A helical membrane pass occupies residues 336-356 (LVAIGSLCALSTSLLGSMFPM). At 357 to 382 (PRVIYAMAEDGLLFRVLARVHNGTHT) the chain is on the cytoplasmic side. Residues 383–403 (PIVATVVSGVIAAFMAFLFEL) form a helical membrane-spanning segment. Topologically, residues 404-406 (TDL) are extracellular. Residues 407–427 (VDLMSIGTLLAYSLVSICVLI) form a helical membrane-spanning segment. At 428–475 (LRYQPDQEMKNGEEEVELQEERTLEAEKLTVQALFCQVDSIPTLLSGR) the chain is on the cytoplasmic side. A helical membrane pass occupies residues 476–496 (IVYVCSSLLAVLLTVLCLVLT). At 497-507 (WWTTPLHSGDP) the chain is on the extracellular side. A helical membrane pass occupies residues 508–528 (VWVTVVVLILGLILGISGVIW). Residues 529-540 (RQPQNRTPLHFK) lie on the Cytoplasmic side of the membrane. A helical transmembrane segment spans residues 541–561 (VPVVPLLPLVSIFVNVYLMMQ). The Extracellular portion of the chain corresponds to 562 to 569 (MTADTWAR). A helical membrane pass occupies residues 570-590 (FGVWMLIGFAIYFGYGIQHSV). At 591–619 (EEVKNHQTLPKTRPQTIDLDLTTSCVHSI) the chain is on the cytoplasmic side. Residue threonine 606 is modified to Phosphothreonine. The residue at position 618 (serine 618) is a Phosphoserine.

This sequence belongs to the amino acid-polyamine-organocation (APC) superfamily. Cationic amino acid transporter (CAT) (TC 2.A.3.3) family. Post-translationally, N-glycosylated. As to expression, highly expressed in brain.

It localises to the cell membrane. The catalysed reaction is L-arginine(in) = L-arginine(out). It catalyses the reaction L-lysine(in) = L-lysine(out). It carries out the reaction L-ornithine(in) = L-ornithine(out). With respect to regulation, inhibited by high potassium ions-induced membrane depolarization. Uniporter that mediates the uptake of cationic L-amino acids such as L-arginine, L-lysine and L-ornithine. The transport is sodium ions- and pH-independent, moderately trans-stimulated and is mediated by passive diffusion. The protein is Cationic amino acid transporter 3 of Rattus norvegicus (Rat).